Here is a 336-residue protein sequence, read N- to C-terminus: Polyprenyl transferase dpasC (336 aa).

The helical transmembrane segment at 34-54 threads the bilayer; the sequence is LFTIFAGGMFLFVASFPTTAF. Asn66 is a glycosylation site (N-linked (GlcNAc...) asparagine). The next 7 helical transmembrane spans lie at 80–100, 125–145, 181–201, 205–225, 253–273, 274–294, and 311–331; these read ALCLSACYSFCGAGMVWNDWI, QAMLWMVFQMAVSWWLLHFML, YILGFTIAWPAVPGRTAIFHG, FAESVQACMPLLNMVFFWTIF, HVHLLLCLLLVPVAVCVPMYL, NQFHSTWLWVSWAGVWALSLL, and LHVDNFLLGAWTVVACTIELL.

Belongs to the UbiA prenyltransferase family. It depends on Mg(2+) as a cofactor.

Its subcellular location is the membrane. It participates in secondary metabolite biosynthesis; terpenoid biosynthesis. Its function is as follows. Polyprenyl transferase; part of the gene cluster that mediates the biosynthesis of the diterpenoid pyrones subglutinols A and B. The first step of the pathway is the synthesis of the alpha-pyrone moiety by the polyketide synthase dpasA via condensation of one acetyl-CoA starter unit with 3 malonyl-CoA units and 2 methylations. The alpha-pyrone is then combined with geranylgeranyl pyrophosphate (GGPP) formed by the GGPP synthase dpasD through the action of the prenyltransferase dpasC to yield a linear alpha-pyrone diterpenoid. Subsequent steps in the diterpenoid pyrone biosynthetic pathway involve the decalin core formation, which is initiated by the epoxidation of the C10-C11 olefin by the FAD-dependent oxidoreductase dpasE, and is followed by a cyclization cascade catalyzed by the terpene cyclase dpasB. The FAD-linked oxidoreductase dpasF is then involved in tetrahydrofuran (THF) ring formation at the C5 unit to complete the formation of subglutinols A and B. DpasF possesses also an additional catalytic ability of multi-step oxidations to generate a new DDP analog with an enone system at the C5 named FDDP A. In Apiospora sacchari (Arthrinium sacchari), this protein is Polyprenyl transferase dpasC.